The following is a 350-amino-acid chain: 3-dehydroquinate synthase (350 aa).

NAD(+) contacts are provided by residues 106-110 (GVIGD), 130-131 (TS), lysine 143, and lysine 152. Residues glutamate 185, histidine 246, and histidine 263 each contribute to the Zn(2+) site.

It belongs to the sugar phosphate cyclases superfamily. Dehydroquinate synthase family. Co(2+) is required as a cofactor. Requires Zn(2+) as cofactor. NAD(+) serves as cofactor.

It localises to the cytoplasm. The catalysed reaction is 7-phospho-2-dehydro-3-deoxy-D-arabino-heptonate = 3-dehydroquinate + phosphate. The protein operates within metabolic intermediate biosynthesis; chorismate biosynthesis; chorismate from D-erythrose 4-phosphate and phosphoenolpyruvate: step 2/7. Its function is as follows. Catalyzes the conversion of 3-deoxy-D-arabino-heptulosonate 7-phosphate (DAHP) to dehydroquinate (DHQ). This is 3-dehydroquinate synthase from Clostridium botulinum (strain Alaska E43 / Type E3).